We begin with the raw amino-acid sequence, 172 residues long: MKKEAKSQVVSEMAQKLASCQAAFLADYRGLTVEQVNQLRGELKKVGVEYRVVKNTLLRLASKGTDAECLSEYLQGPNAIALAEEDPVGPAKVLTQFAKSNKAFELRAAELNGKLLSIDEVKALAELPSKEELLGKMLGSINAPVSNFVGVLAAVPRTFVQVLAAIQQQKEG.

This sequence belongs to the universal ribosomal protein uL10 family. Part of the ribosomal stalk of the 50S ribosomal subunit. The N-terminus interacts with L11 and the large rRNA to form the base of the stalk. The C-terminus forms an elongated spine to which L12 dimers bind in a sequential fashion forming a multimeric L10(L12)X complex.

Forms part of the ribosomal stalk, playing a central role in the interaction of the ribosome with GTP-bound translation factors. The protein is Large ribosomal subunit protein uL10 of Syntrophotalea carbinolica (strain DSM 2380 / NBRC 103641 / GraBd1) (Pelobacter carbinolicus).